A 117-amino-acid polypeptide reads, in one-letter code: Large ribosomal subunit protein uL18 (117 aa).

Belongs to the universal ribosomal protein uL18 family. In terms of assembly, part of the 50S ribosomal subunit; part of the 5S rRNA/L5/L18/L25 subcomplex. Contacts the 5S and 23S rRNAs.

Functionally, this is one of the proteins that bind and probably mediate the attachment of the 5S RNA into the large ribosomal subunit, where it forms part of the central protuberance. The sequence is that of Large ribosomal subunit protein uL18 from Aster yellows witches'-broom phytoplasma (strain AYWB).